Reading from the N-terminus, the 82-residue chain is MAVRIRLKRFGAKKRPFYRIVVADSRSPRDGRFIDEIGYYNPIAEPAEIKIDVEKAKKWLSVGAQPSDTVKSLFRKEGIINN.

This sequence belongs to the bacterial ribosomal protein bS16 family.

The chain is Small ribosomal subunit protein bS16 from Caldanaerobacter subterraneus subsp. tengcongensis (strain DSM 15242 / JCM 11007 / NBRC 100824 / MB4) (Thermoanaerobacter tengcongensis).